The following is an 883-amino-acid chain: Phosphoenolpyruvate carboxylase (883 aa).

Active-site residues include His-138 and Lys-546.

This sequence belongs to the PEPCase type 1 family. Homotetramer. Requires Mg(2+) as cofactor.

The enzyme catalyses oxaloacetate + phosphate = phosphoenolpyruvate + hydrogencarbonate. Its activity is regulated as follows. The enzyme has distinct binding sites for each of the allosteric effectors such as acetyl-CoA, fructose 1,6-bisphosphate, guanosine 3'-diphosphate 5'-diphosphate, long chain fatty acids, and L-aspartate. In terms of biological role, forms oxaloacetate, a four-carbon dicarboxylic acid source for the tricarboxylic acid cycle. The polypeptide is Phosphoenolpyruvate carboxylase (Escherichia coli O157:H7).